We begin with the raw amino-acid sequence, 366 residues long: Acetylserotonin O-methyltransferase 3 (366 aa).

The S-adenosyl-L-homocysteine site is built by G209, D232, D253, and K267. H271 (proton acceptor) is an active-site residue. Active-site residues include E302 and E332.

The protein belongs to the class I-like SAM-binding methyltransferase superfamily. Cation-independent O-methyltransferase family. As to quaternary structure, homodimer. Expressed at low levels in roots, shoots, leaves, stems and flowers.

It localises to the cytoplasm. It catalyses the reaction N-acetylserotonin + S-adenosyl-L-methionine = melatonin + S-adenosyl-L-homocysteine + H(+). The protein operates within aromatic compound metabolism; melatonin biosynthesis; melatonin from serotonin: step 1/2. Methyltransferase which catalyzes the transfer of a methyl group onto N-acetylserotonin, producing melatonin (N-acetyl-5-methoxytryptamine). This Oryza sativa subsp. japonica (Rice) protein is Acetylserotonin O-methyltransferase 3.